Reading from the N-terminus, the 546-residue chain is MSKNPGRILIFDTTLRDGEQSPGASLNLEEKLAIAHQLARLGVDVIEAGFPFASPGDFKAVNKIASAVGKEHGPTICGLARASKGDIKACYEAVSPAPKKRIHTFIATSDIHLKHKLKKSRKDVLQIVPEMVNYAKSLVDDIEFSCEDASRSDPDFLYEVIQLAISAGATTINIPDTVGFTTPSEFGNLIADINKNVPNIDEAVISVHGHNDLGLAVANFLEAVKNGARQLECTINGIGERAGNASLEELVMALHVRKSFFNSFFKRNPDSPTPLTAIRTEEITKTSRLVSNLTGMTVQPNKAIVGANAFAHESGIHQDGVLKNRLTYEIIDAKTVGLSDNKISLGKLSGRSAVRARLEEMGYDLSREDLNDAFARFKDLADRKREITDRDLEAIVSEQVQLPEAKFQLSLVQVSCGNASKPTATISLLNTEDNTEDTAVSIGTGPVDAVCEALNKLAKVPNELIEFSVKSVTEGIDALGEVTIRIRRDNKIYSGHSADTDVVVAAANAYINALNRLVFSEKKNSIHPQFDNLENSNNTYISNPAN.

The region spanning Ile8–Ser271 is the Pyruvate carboxyltransferase domain. 4 residues coordinate Mn(2+): Asp17, His208, His210, and Asn244. The regulatory domain stretch occupies residues Gln408 to Asn546.

The protein belongs to the alpha-IPM synthase/homocitrate synthase family. LeuA type 1 subfamily. In terms of assembly, homodimer. Requires Mn(2+) as cofactor.

Its subcellular location is the cytoplasm. It catalyses the reaction 3-methyl-2-oxobutanoate + acetyl-CoA + H2O = (2S)-2-isopropylmalate + CoA + H(+). It participates in amino-acid biosynthesis; L-leucine biosynthesis; L-leucine from 3-methyl-2-oxobutanoate: step 1/4. In terms of biological role, catalyzes the condensation of the acetyl group of acetyl-CoA with 3-methyl-2-oxobutanoate (2-ketoisovalerate) to form 3-carboxy-3-hydroxy-4-methylpentanoate (2-isopropylmalate). In Prochlorococcus marinus (strain MIT 9301), this protein is 2-isopropylmalate synthase.